A 150-amino-acid polypeptide reads, in one-letter code: Large ribosomal subunit protein bL9 (150 aa).

The protein belongs to the bacterial ribosomal protein bL9 family.

Its function is as follows. Binds to the 23S rRNA. In Neisseria meningitidis serogroup C / serotype 2a (strain ATCC 700532 / DSM 15464 / FAM18), this protein is Large ribosomal subunit protein bL9.